The chain runs to 65 residues: Large ribosomal subunit protein bL35 (65 aa).

The disordered stretch occupies residues 1 to 29 (MPKMKTNRGAAKRFKKTGSGRIKRGKAFT). A compositionally biased stretch (basic residues) spans 10 to 26 (AAKRFKKTGSGRIKRGK).

This sequence belongs to the bacterial ribosomal protein bL35 family.

The protein is Large ribosomal subunit protein bL35 of Desulfotalea psychrophila (strain LSv54 / DSM 12343).